The following is a 157-amino-acid chain: MKEIVLAGGCFWGVEEYMSRIKGIVETKVGYANGIKENPSYEEVCSGTTGHAEACYIKYDESIISLEELLNKFWSIIDPTVLNKQGNDRGTQYRTGIFYLDQKDLNVIIKSKSQEQKNYRKPIVTEVEPLKCFYEAEEYHQKYLKKNPGGYCHIHLD.

The active site involves Cys-10.

Belongs to the MsrA Met sulfoxide reductase family.

The enzyme catalyses L-methionyl-[protein] + [thioredoxin]-disulfide + H2O = L-methionyl-(S)-S-oxide-[protein] + [thioredoxin]-dithiol. It catalyses the reaction [thioredoxin]-disulfide + L-methionine + H2O = L-methionine (S)-S-oxide + [thioredoxin]-dithiol. Its function is as follows. Has an important function as a repair enzyme for proteins that have been inactivated by oxidation. Catalyzes the reversible oxidation-reduction of methionine sulfoxide in proteins to methionine. The polypeptide is Peptide methionine sulfoxide reductase MsrA (Clostridium botulinum (strain Okra / Type B1)).